The following is a 302-amino-acid chain: Citrate lyase subunit beta (302 aa).

Residues Arg76 and Glu139 each coordinate substrate. Glu139 and Asp166 together coordinate Mg(2+).

It belongs to the HpcH/HpaI aldolase family. Citrate lyase beta subunit subfamily. In terms of assembly, oligomer with a subunit composition of (alpha,beta,gamma)6. Mg(2+) is required as a cofactor.

It is found in the cytoplasm. It carries out the reaction citrate = oxaloacetate + acetate. The catalysed reaction is (3S)-citryl-CoA = oxaloacetate + acetyl-CoA. In terms of biological role, represents a citryl-ACP lyase. This is Citrate lyase subunit beta (citE) from Escherichia coli O6:H1 (strain CFT073 / ATCC 700928 / UPEC).